We begin with the raw amino-acid sequence, 80 residues long: uncharacterized protein (80 aa).

The signal sequence occupies residues 1 to 23; it reads MKWNNMLKAAGIAVLLFSVFAYA.

This is an uncharacterized protein from Bacillus subtilis (strain 168).